Here is a 113-residue protein sequence, read N- to C-terminus: MSQQAIGSLETKGFPPILAAADAMVKAGRITIVSYMRAGSARFAVNIRGDVSEVKTAMDAGIEAAKNTPGGTLETWVIIPRPHENVEAVFPIGFGPEVEQYRLSAEGTGSGRR.

The 87-residue stretch at Ala5–Pro91 folds into the BMC domain.

Belongs to the bacterial microcompartments protein family. CcmK subfamily. In terms of assembly, homohexamer. Interacts stably with CcmK3, probably forms heterohexamers with a 1:2 CcmK3:CcmK4 stoichiometry.

It is found in the carboxysome. One of the shell proteins of the carboxysome, a polyhedral inclusion where RuBisCO (ribulose bisphosphate carboxylase, rbcL-rbcS) is sequestered. Assembles into hexamers which make sheets that form the facets of the polyhedral carboxysome. The hexamer central pore probably regulates metabolite flux. In terms of biological role, a minor shell protein of the carboxysome, a polyhedral inclusion where RuBisCO (ribulose bisphosphate carboxylase, rbcL-rbcS) is sequestered. Hexamers form sheets that form the facets of the polyhedral carboxysome. The shell is 4.5 nm thick, as observed for CcmK proteins. In PCC 7942 there are several CcmK paralogs with presumably functional differences; replacing the central pore residues (34-37) with those of CcmK2 from this organism (Tyr-Glu-Lys-Ile) allows the bacterium to make carboxysomes, but the expression level is too low to know if the carboxysome is functional for CO(2) fixation. This subunit probably makes both homohexamers and heterohexamers with CcmK3. The CcmK3-CcmK4 heterohexmers have been suggested to cap other hexamers, perhaps to alter metabolite flux. The polypeptide is Carboxysome shell protein CcmK4 (Synechococcus elongatus (strain ATCC 33912 / PCC 7942 / FACHB-805) (Anacystis nidulans R2)).